A 79-amino-acid polypeptide reads, in one-letter code: Small ribosomal subunit protein uS17 (79 aa).

It belongs to the universal ribosomal protein uS17 family. Part of the 30S ribosomal subunit.

In terms of biological role, one of the primary rRNA binding proteins, it binds specifically to the 5'-end of 16S ribosomal RNA. This Rhizobium rhizogenes (strain K84 / ATCC BAA-868) (Agrobacterium radiobacter) protein is Small ribosomal subunit protein uS17.